The chain runs to 637 residues: MNDWSIDAARAGYNVTHWSQGFYGISDQGEVTVSPDPKNPDHKIGLNELAKDMVKAGVALPVLVRFPQILHHRVNSLCQAFDQAIQKYEYQADYLLVYPIKVNQQKTVVEEILASQASKEVPQLGLEAGSKPELMAVLAMAQKASSVIVCNGYKDNEYIRLALIGEKLGHKVYIVLEKLSELKMVLAESKRLGVKPRLGLRARLAFQGKGKWQASGGEKSKFGLSAAQILTVVDQLKENDMLDSLQLLHFHLGSQIANIRDIRQGVSEAARFYCELRELGASINCFDVGGGLAVDYDGTRSQSNNSMNYGLSEYANNIVNVLTDICNEYEQPMPRIISESGRHLTAHHAVLITDVIGTEAYQVEDIQPPAEESPQLLHNMWQSWTELSGRADQRALIEIYHDSQSDLQEAQSLFALGQLSLAERAWAEQANLRVCHEVQGLLSTKNRYHRPIIDELNEKLADKFFVNFSLFQSLPDAWGIDQVFPVLPLSGLDKAPERRAVMLDITCDSDGIVDQYVDGQGIETTLPVPAWSAESPYLMGFFMVGAYQEILGDMHNLFGDTNSAVVSIEENGMTNIESVLAGDTVADVLRYVNLDAVDFMRTYEELVNQHIVEEERAQILEELQVGLKGYTYLEDFS.

Lysine 101 is modified (N6-(pyridoxal phosphate)lysine). 286–296 (FDVGGGLAVDY) lines the substrate pocket.

The protein belongs to the Orn/Lys/Arg decarboxylase class-II family. SpeA subfamily. The cofactor is Mg(2+). Requires pyridoxal 5'-phosphate as cofactor.

It carries out the reaction L-arginine + H(+) = agmatine + CO2. It participates in amine and polyamine biosynthesis; agmatine biosynthesis; agmatine from L-arginine: step 1/1. Its function is as follows. Catalyzes the biosynthesis of agmatine from arginine. This chain is Biosynthetic arginine decarboxylase, found in Shewanella sp. (strain MR-7).